The chain runs to 237 residues: Cysteine-rich venom protein DIS3 (237 aa).

A signal peptide spans 1 to 18 (MFVFILLSLAAVLQQSFG). One can recognise an SCP domain in the interval 37–165 (VDKHNAFRRS…SYDYFYVCQY (129 aa)). Disulfide bonds link Cys74–Cys152, Cys91–Cys166, Cys147–Cys163, Cys185–Cys192, Cys188–Cys197, Cys201–Cys234, and Cys219–Cys232. The 34-residue stretch at 201–234 (CSREDVFTNCKSLVAKSNCQDDYIRKNCLATCFC) folds into the ShKT domain.

Belongs to the CRISP family. Expressed by the venom gland.

The protein localises to the secreted. In terms of biological role, weakly blocks contraction of smooth muscle elicited by high potassium-induced depolarization, but does not block caffeine-stimulated contraction. May target voltage-gated calcium channels on smooth muscle. The protein is Cysteine-rich venom protein DIS3 of Dispholidus typus (Boomslang).